We begin with the raw amino-acid sequence, 176 residues long: ATP synthase subunit b (176 aa).

A helical transmembrane segment spans residues Phe-24–Gly-43.

The protein belongs to the ATPase B chain family. In terms of assembly, F-type ATPases have 2 components, F(1) - the catalytic core - and F(0) - the membrane proton channel. F(1) has five subunits: alpha(3), beta(3), gamma(1), delta(1), epsilon(1). F(0) has three main subunits: a(1), b(2) and c(10-14). The alpha and beta chains form an alternating ring which encloses part of the gamma chain. F(1) is attached to F(0) by a central stalk formed by the gamma and epsilon chains, while a peripheral stalk is formed by the delta and b chains.

It localises to the cell inner membrane. In terms of biological role, f(1)F(0) ATP synthase produces ATP from ADP in the presence of a proton or sodium gradient. F-type ATPases consist of two structural domains, F(1) containing the extramembraneous catalytic core and F(0) containing the membrane proton channel, linked together by a central stalk and a peripheral stalk. During catalysis, ATP synthesis in the catalytic domain of F(1) is coupled via a rotary mechanism of the central stalk subunits to proton translocation. Its function is as follows. Component of the F(0) channel, it forms part of the peripheral stalk, linking F(1) to F(0). The protein is ATP synthase subunit b of Nitratidesulfovibrio vulgaris (strain ATCC 29579 / DSM 644 / CCUG 34227 / NCIMB 8303 / VKM B-1760 / Hildenborough) (Desulfovibrio vulgaris).